Reading from the N-terminus, the 289-residue chain is uncharacterized protein (289 aa).

9 helical membrane passes run 13–32, 37–59, 80–99, 104–121, 141–160, 165–183, 203–225, 235–252, and 265–287; these read INFAYPIPLLSLLAFMLSGS, LIISYIFAFSFFTAANLWNHLND, IVTEFVVAFYFVSFLLIFFI, EIALLLTGLSVVLTWLYS, VFTYILCSFSFPLSFWTIFS, VGVVFTLATGFTYLSGFFL, VLSPSTLLIISVMLFIASTFVVI, TSSLLVLTVYPPILFAIY, and IISSLKIYTYSYLGFLIAFAIGC.

It localises to the cell membrane. This is an uncharacterized protein from Archaeoglobus fulgidus (strain ATCC 49558 / DSM 4304 / JCM 9628 / NBRC 100126 / VC-16).